The following is a 434-amino-acid chain: Glutamate-1-semialdehyde 2,1-aminomutase 2 (434 aa).

K269 carries the N6-(pyridoxal phosphate)lysine modification.

This sequence belongs to the class-III pyridoxal-phosphate-dependent aminotransferase family. HemL subfamily. In terms of assembly, homodimer. The cofactor is pyridoxal 5'-phosphate.

The protein localises to the cytoplasm. It carries out the reaction (S)-4-amino-5-oxopentanoate = 5-aminolevulinate. It participates in porphyrin-containing compound metabolism; protoporphyrin-IX biosynthesis; 5-aminolevulinate from L-glutamyl-tRNA(Glu): step 2/2. This chain is Glutamate-1-semialdehyde 2,1-aminomutase 2, found in Exiguobacterium sp. (strain ATCC BAA-1283 / AT1b).